The sequence spans 127 residues: Glycine cleavage system H protein (127 aa).

The region spanning 22–104 (EAVIGITQFA…YTDGWMVRVK (83 aa)) is the Lipoyl-binding domain. At K63 the chain carries N6-lipoyllysine.

It belongs to the GcvH family. In terms of assembly, the glycine cleavage system is composed of four proteins: P, T, L and H. The cofactor is (R)-lipoate.

Functionally, the glycine cleavage system catalyzes the degradation of glycine. The H protein shuttles the methylamine group of glycine from the P protein to the T protein. In Nitratidesulfovibrio vulgaris (strain DSM 19637 / Miyazaki F) (Desulfovibrio vulgaris), this protein is Glycine cleavage system H protein.